Reading from the N-terminus, the 406-residue chain is Multifunctional CCA protein (406 aa).

ATP contacts are provided by Gly8 and Arg11. Residues Gly8 and Arg11 each contribute to the CTP site. Positions 21 and 23 each coordinate Mg(2+). Arg91, Arg137, and Arg140 together coordinate ATP. CTP-binding residues include Arg91, Arg137, and Arg140. The HD domain maps to 228–329 (TGIHTLMVAQ…IKILNKFDVW (102 aa)).

It belongs to the tRNA nucleotidyltransferase/poly(A) polymerase family. Bacterial CCA-adding enzyme type 1 subfamily. In terms of assembly, monomer. Can also form homodimers and oligomers. Mg(2+) is required as a cofactor. The cofactor is Ni(2+).

It catalyses the reaction a tRNA precursor + 2 CTP + ATP = a tRNA with a 3' CCA end + 3 diphosphate. The enzyme catalyses a tRNA with a 3' CCA end + 2 CTP + ATP = a tRNA with a 3' CCACCA end + 3 diphosphate. Catalyzes the addition and repair of the essential 3'-terminal CCA sequence in tRNAs without using a nucleic acid template. Adds these three nucleotides in the order of C, C, and A to the tRNA nucleotide-73, using CTP and ATP as substrates and producing inorganic pyrophosphate. tRNA 3'-terminal CCA addition is required both for tRNA processing and repair. Also involved in tRNA surveillance by mediating tandem CCA addition to generate a CCACCA at the 3' terminus of unstable tRNAs. While stable tRNAs receive only 3'-terminal CCA, unstable tRNAs are marked with CCACCA and rapidly degraded. This Vibrio campbellii (strain ATCC BAA-1116) protein is Multifunctional CCA protein.